The primary structure comprises 279 residues: Acetylglutamate kinase (279 aa).

Substrate contacts are provided by residues 64-65 (GG), Arg86, and Asn177.

It belongs to the acetylglutamate kinase family. ArgB subfamily.

The protein localises to the cytoplasm. It catalyses the reaction N-acetyl-L-glutamate + ATP = N-acetyl-L-glutamyl 5-phosphate + ADP. It participates in amino-acid biosynthesis; L-arginine biosynthesis; N(2)-acetyl-L-ornithine from L-glutamate: step 2/4. Catalyzes the ATP-dependent phosphorylation of N-acetyl-L-glutamate. The polypeptide is Acetylglutamate kinase (Campylobacter jejuni (strain RM1221)).